The sequence spans 356 residues: Histidinol-phosphate aminotransferase (356 aa).

Lys214 carries the N6-(pyridoxal phosphate)lysine modification.

The protein belongs to the class-II pyridoxal-phosphate-dependent aminotransferase family. Histidinol-phosphate aminotransferase subfamily. In terms of assembly, homodimer. Pyridoxal 5'-phosphate serves as cofactor.

It carries out the reaction L-histidinol phosphate + 2-oxoglutarate = 3-(imidazol-4-yl)-2-oxopropyl phosphate + L-glutamate. Its pathway is amino-acid biosynthesis; L-histidine biosynthesis; L-histidine from 5-phospho-alpha-D-ribose 1-diphosphate: step 7/9. This chain is Histidinol-phosphate aminotransferase, found in Shigella flexneri serotype 5b (strain 8401).